Reading from the N-terminus, the 475-residue chain is MNIGRAIKVTQAVVDIKFEGELPKIFNALKSKLKYKDKELVLEVSQHIGDNIVRCIAMDSTDGMSRGDEFVDTGAPISVPIGRSTLGRIFNVVGELIDECGPLKGKYNLEPIHRAPPSFTEQRIQEEVLVTGIKVIDLLAPYLKGGKIGLFGGAGVGKTVLIMELINNIAKAHKGFSVFAGVGERTREGNDLYHEMITSNVININEHEKSQAVLVYGQMNEPPGARARVALTALTMAEYFRDRENQDVLFFVDNIFRFTQAGSEISALLGRIPSAVGYQPTLATDMGAMQERIASTTSGSITSVQAIYVPADDLTDPAPATTFSHLDATTVLSRQIAEMGIYPAVDPLDSTSQSLSAEIIGEEHYKVASEVKRILQTYKSLQDIIAILGMDELSDEDKIIVDRARKIQKFLSQPFHVAEIFTGMPGKFVSLSDTVSSFKGIVEGKYDHLPEAAFYMVGNIDEAIKKAELIQAEAK.

An ATP-binding site is contributed by 152–159 (GGAGVGKT).

It belongs to the ATPase alpha/beta chains family. In terms of assembly, F-type ATPases have 2 components, CF(1) - the catalytic core - and CF(0) - the membrane proton channel. CF(1) has five subunits: alpha(3), beta(3), gamma(1), delta(1), epsilon(1). CF(0) has three main subunits: a(1), b(2) and c(9-12). The alpha and beta chains form an alternating ring which encloses part of the gamma chain. CF(1) is attached to CF(0) by a central stalk formed by the gamma and epsilon chains, while a peripheral stalk is formed by the delta and b chains.

It localises to the cell inner membrane. The enzyme catalyses ATP + H2O + 4 H(+)(in) = ADP + phosphate + 5 H(+)(out). Produces ATP from ADP in the presence of a proton gradient across the membrane. The catalytic sites are hosted primarily by the beta subunits. The polypeptide is ATP synthase subunit beta (Wolbachia sp. subsp. Drosophila simulans (strain wRi)).